Consider the following 339-residue polypeptide: Ketol-acid reductoisomerase (NADP(+)) (339 aa).

Residues 1 to 182 (MRVYYDRDAD…GGGRSGIIET (182 aa)) enclose the KARI N-terminal Rossmann domain. Residues 24–27 (YGSQ), arginine 48, serine 51, threonine 53, and 83–86 (DEHQ) contribute to the NADP(+) site. Histidine 108 is a catalytic residue. Glycine 134 serves as a coordination point for NADP(+). The 146-residue stretch at 183–328 (NFREECETDL…ARLRGMMPWI (146 aa)) folds into the KARI C-terminal knotted domain. Positions 191, 195, 227, and 231 each coordinate Mg(2+). Serine 252 serves as a coordination point for substrate.

The protein belongs to the ketol-acid reductoisomerase family. Mg(2+) serves as cofactor.

It catalyses the reaction (2R)-2,3-dihydroxy-3-methylbutanoate + NADP(+) = (2S)-2-acetolactate + NADPH + H(+). It carries out the reaction (2R,3R)-2,3-dihydroxy-3-methylpentanoate + NADP(+) = (S)-2-ethyl-2-hydroxy-3-oxobutanoate + NADPH + H(+). It functions in the pathway amino-acid biosynthesis; L-isoleucine biosynthesis; L-isoleucine from 2-oxobutanoate: step 2/4. Its pathway is amino-acid biosynthesis; L-valine biosynthesis; L-valine from pyruvate: step 2/4. Its function is as follows. Involved in the biosynthesis of branched-chain amino acids (BCAA). Catalyzes an alkyl-migration followed by a ketol-acid reduction of (S)-2-acetolactate (S2AL) to yield (R)-2,3-dihydroxy-isovalerate. In the isomerase reaction, S2AL is rearranged via a Mg-dependent methyl migration to produce 3-hydroxy-3-methyl-2-ketobutyrate (HMKB). In the reductase reaction, this 2-ketoacid undergoes a metal-dependent reduction by NADPH to yield (R)-2,3-dihydroxy-isovalerate. The chain is Ketol-acid reductoisomerase (NADP(+)) from Caulobacter vibrioides (strain ATCC 19089 / CIP 103742 / CB 15) (Caulobacter crescentus).